Here is a 126-residue protein sequence, read N- to C-terminus: Cornifin alpha (126 aa).

S2 is modified (N-acetylserine). 13 consecutive repeat copies span residues 3 to 14 (SQQQKQPCTLPP), 18 to 29 (QHQVKQPCQPPP), 31 to 38 (EPCVPKTK), 39 to 46 (EPCQPKVP), 47 to 54 (EPCQPKVP), 55 to 62 (EPCQPKVP), 63 to 70 (EPCQPKVP), 71 to 78 (QPCQPKVP), 79 to 86 (EPCQPKVP), 87 to 94 (EPCQPKVP), 95 to 102 (EPCQPKVP), 103 to 110 (EPCQSKVP), and 111 to 118 (QPCQPKVP). The tract at residues 3–29 (SQQQKQPCTLPPQLQQHQVKQPCQPPP) is 2 X 12 AA approximate repeats. The segment at 20 to 43 (QVKQPCQPPPQEPCVPKTKEPCQP) is disordered. The 11 X 8 AA approximate tandem repeats stretch occupies residues 31–122 (EPCVPKTKEP…CQPKVPEPCQ (92 aa)). The tract at residues 104–126 (PCQSKVPQPCQPKVPEPCQTKQK) is disordered.

This sequence belongs to the cornifin (SPRR) family. Suprabasal layers of squamous-differentiated tissues such as epidermis, esophagus, tongue and trachea.

It is found in the cytoplasm. Functionally, cross-linked envelope protein of keratinocytes. It is a keratinocyte protein that first appears in the cell cytosol, but ultimately becomes cross-linked to membrane proteins by transglutaminase. All that results in the formation of an insoluble envelope beneath the plasma membrane. The polypeptide is Cornifin alpha (Oryctolagus cuniculus (Rabbit)).